A 219-amino-acid polypeptide reads, in one-letter code: Putative protease Do-like 6, chloroplastic (219 aa).

The transit peptide at 1 to 45 directs the protein to the chloroplast; sequence MLFRSVHHIVARFSNSTSTPIHRFFYSPSLLRRRSSFNASLISRC. The interval 61–216 is serine protease; the sequence is KIFSFSREPN…YSGQINKKIY (156 aa). Active-site charge relay system residues include His-99, Asp-130, and Ser-208.

It belongs to the peptidase S1B family.

It localises to the plastid. Its subcellular location is the chloroplast. In terms of biological role, putative serine protease. The polypeptide is Putative protease Do-like 6, chloroplastic (DEGP6) (Arabidopsis thaliana (Mouse-ear cress)).